Reading from the N-terminus, the 847-residue chain is Pep5-like zinc finger protein C16A10.03c (847 aa).

The CHCR repeat unit spans residues 387–526; it reads YIEAIPFSDS…GIWLFNSDPM (140 aa). An RING-type; atypical zinc finger spans residues 780 to 814; that stretch reads CDNCEGLLDVPFVSYSCLHLVHRDCATETVCPKCK.

It is found in the cytoplasm. The protein localises to the nucleus. The protein is Pep5-like zinc finger protein C16A10.03c of Schizosaccharomyces pombe (strain 972 / ATCC 24843) (Fission yeast).